Reading from the N-terminus, the 555-residue chain is MAAAGAAATDLEVVRGKRSALFFAAVAILLGLPLWWKTTETYRAPLPYSDISGLNALLLRLMVPVTVVFTRDSVPLDDQEKLPFTVVHEREIPLKYKMKIKCRFQKAYRRALEHEEEALSLGSVHEAEAMLAEPEKQAEGSLTVYVISEHSSLLPQDMMSYIGPERTAVVRGLIHREAFNIIGRRIVQVAQAMSLTEDVLAAALADHLPEDKWSSDKRRPLKSSLGYEITFSLLNPDPKSHDVHWDIEGAVQRFVQPFLNRLSVAGNFSVDSQILYYAMLGVNPRFDPASSSYSLAMHSLPHVINPVESRLGSSAASLYPVLHFLLYVPELAHSPLYIQDKDGAPVATNAFHSPRWGGIMVYNVDPKIYNASELPVRVEVDMVRVMEVFLAQLRLLFGIAQPQVPPKCLLSGPKSEGLMTWELDRLLWARSVENLATATTTLTSLAQLLGKISNIVIKDDVASEVYRAVAAVQKAAKALALGHLSSAFAASQEAVTSSERAFFDPSLLHLLYFPDDQKFAIYIPLFLPMAVPILLSLVKIFQETRKSWKKPEKID.

Over 2–18 (AAAGAAATDLEVVRGKR) the chain is Cytoplasmic. A cardiolipin contacts are provided by R15 and R18. The helical transmembrane segment at 19 to 39 (SALFFAAVAILLGLPLWWKTT) threads the bilayer. The Lumenal segment spans residues 40–517 (ETYRAPLPYS…LHLLYFPDDQ (478 aa)). N267 and N370 each carry an N-linked (GlcNAc...) asparagine glycan. The helical transmembrane segment at 518 to 532 (KFAIYIPLFLPMAVP) threads the bilayer. Topologically, residues 533–555 (ILLSLVKIFQETRKSWKKPEKID) are cytoplasmic.

It belongs to the PIGS family. In terms of assembly, heteropentamer. Part of the GPI-anchor transamidase complex, consisting of PIGK, PIGT, PIGS, PIGU and GAA1.

It localises to the endoplasmic reticulum membrane. Its pathway is glycolipid biosynthesis; glycosylphosphatidylinositol-anchor biosynthesis. Its function is as follows. Component of the glycosylphosphatidylinositol-anchor (GPI-anchor) transamidase (GPI-T) complex that catalyzes the formation of the linkage between a proprotein and a GPI-anchor and participates in GPI anchored protein biosynthesis. This chain is GPI-anchor transamidase component PIGS, found in Mus musculus (Mouse).